The chain runs to 208 residues: Small ribosomal subunit protein uS4 (208 aa).

The 64-residue stretch at 98-161 (RRLDNVVYRL…RKIPVLAEAQ (64 aa)) folds into the S4 RNA-binding domain.

This sequence belongs to the universal ribosomal protein uS4 family. Part of the 30S ribosomal subunit. Contacts protein S5. The interaction surface between S4 and S5 is involved in control of translational fidelity.

In terms of biological role, one of the primary rRNA binding proteins, it binds directly to 16S rRNA where it nucleates assembly of the body of the 30S subunit. Its function is as follows. With S5 and S12 plays an important role in translational accuracy. The protein is Small ribosomal subunit protein uS4 of Desulfovibrio desulfuricans (strain ATCC 27774 / DSM 6949 / MB).